A 441-amino-acid polypeptide reads, in one-letter code: Tubulin beta-1 chain (441 aa).

Residues Q11, E69, S138, G142, T143, G144, N204, and N226 each coordinate GTP. E69 provides a ligand contact to Mg(2+).

The protein belongs to the tubulin family. As to quaternary structure, dimer of alpha and beta chains. A typical microtubule is a hollow water-filled tube with an outer diameter of 25 nm and an inner diameter of 15 nM. Alpha-beta heterodimers associate head-to-tail to form protofilaments running lengthwise along the microtubule wall with the beta-tubulin subunit facing the microtubule plus end conferring a structural polarity. Microtubules usually have 13 protofilaments but different protofilament numbers can be found in some organisms and specialized cells. Requires Mg(2+) as cofactor. As to expression, expressed primarily in touch receptor neurons.

Its subcellular location is the cytoplasm. It localises to the cytoskeleton. Its function is as follows. TTubulin is the major constituent of microtubules, a cylinder consisting of laterally associated linear protofilaments composed of alpha- and beta-tubulin heterodimers. Microtubules grow by the addition of GTP-tubulin dimers to the microtubule end, where a stabilizing cap forms. Below the cap, tubulin dimers are in GDP-bound state, owing to GTPase activity of alpha-tubulin. Plays a role in mechanosensory transduction (touch sensitivity). Functionally, mec-7 beta-tubulin is required for the production of 15-protofilament microtubules. This chain is Tubulin beta-1 chain (mec-7), found in Caenorhabditis elegans.